The chain runs to 650 residues: Replication protein E1 (650 aa).

The Nuclear localization signal motif lies at 84-86 (KRK). A phosphoserine; by host mark is found at serine 90, serine 94, serine 108, and serine 121. The Nuclear export signal motif lies at 107 to 116 (LSPQINVLSI). The segment at 187 to 353 (TESTPITDIT…QTLVQHSLDD (167 aa)) is DNA-binding region. Positions 452–602 (VEFMPFLITL…FPFDSNGNPL (151 aa)) constitute an SF3 helicase domain. An ATP-binding site is contributed by 478–485 (GPPDTGKS). A Glycyl lysine isopeptide (Lys-Gly) (interchain with G-Cter in SUMO) cross-link involves residue lysine 559.

Belongs to the papillomaviridae E1 protein family. As to quaternary structure, can form hexamers. Interacts with E2 protein; this interaction increases E1 DNA binding specificity. Interacts with host DNA polymerase subunit POLA2. Interacts with host single stranded DNA-binding protein RPA1. Interacts with host TOP1; this interaction stimulates the enzymatic activity of TOP1. Phosphorylated. In terms of processing, sumoylated.

The protein localises to the host nucleus. The enzyme catalyses Couples ATP hydrolysis with the unwinding of duplex DNA by translocating in the 3'-5' direction.. The catalysed reaction is ATP + H2O = ADP + phosphate + H(+). Functionally, ATP-dependent DNA 3'-5' helicase required for initiation of viral DNA replication. It forms a complex with the viral E2 protein. The E1-E2 complex binds to the replication origin which contains binding sites for both proteins. During the initial step, a dimer of E1 interacts with a dimer of protein E2 leading to a complex that binds the viral origin of replication with high specificity. Then, a second dimer of E1 displaces the E2 dimer in an ATP-dependent manner to form the E1 tetramer. Following this, two E1 monomers are added to each half of the site, which results in the formation of two E1 trimers on the viral ori. Subsequently, two hexamers will be created. The double hexamer acts as a bi-directional helicase machinery and unwinds the viral DNA and then recruits the host DNA polymerase to start replication. The chain is Replication protein E1 from Homo sapiens (Human).